The chain runs to 487 residues: NADH-quinone oxidoreductase subunit N (487 aa).

The next 14 membrane-spanning stretches (helical) occupy residues 16–36, 45–65, 79–99, 111–131, 133–153, 168–188, 212–232, 257–276, 281–298, 306–326, 333–353, 378–398, 413–435, and 457–477; these read VIMP…VNVF, LAWL…TGWG, NFAI…VLIS, GELY…AAAT, LMTI…LAGF, FLLG…IYGV, LLIG…AAPF, AAGF…AMIA, LLWI…FTAL, MLAY…ASGT, ILFY…VIVL, ALAM…AGFI, IWLA…RVIV, and LALV…SMIL.

The protein belongs to the complex I subunit 2 family. In terms of assembly, NDH-1 is composed of 14 different subunits. Subunits NuoA, H, J, K, L, M, N constitute the membrane sector of the complex.

It is found in the cell inner membrane. The catalysed reaction is a quinone + NADH + 5 H(+)(in) = a quinol + NAD(+) + 4 H(+)(out). In terms of biological role, NDH-1 shuttles electrons from NADH, via FMN and iron-sulfur (Fe-S) centers, to quinones in the respiratory chain. The immediate electron acceptor for the enzyme in this species is believed to be ubiquinone. Couples the redox reaction to proton translocation (for every two electrons transferred, four hydrogen ions are translocated across the cytoplasmic membrane), and thus conserves the redox energy in a proton gradient. This is NADH-quinone oxidoreductase subunit N from Trichlorobacter lovleyi (strain ATCC BAA-1151 / DSM 17278 / SZ) (Geobacter lovleyi).